The following is a 634-amino-acid chain: Threonine--tRNA ligase (634 aa).

The TGS domain occupies 1–61 (MFEVKLKDGS…DSDCEVQFVK (61 aa)). Residues 242 to 532 (DHRKIGKEMG…LIEHYAGKFP (291 aa)) form a catalytic region. Zn(2+) contacts are provided by Cys333, His384, and His509.

It belongs to the class-II aminoacyl-tRNA synthetase family. As to quaternary structure, homodimer. Zn(2+) serves as cofactor.

It localises to the cytoplasm. It catalyses the reaction tRNA(Thr) + L-threonine + ATP = L-threonyl-tRNA(Thr) + AMP + diphosphate + H(+). Catalyzes the attachment of threonine to tRNA(Thr) in a two-step reaction: L-threonine is first activated by ATP to form Thr-AMP and then transferred to the acceptor end of tRNA(Thr). Also edits incorrectly charged L-seryl-tRNA(Thr). This Finegoldia magna (strain ATCC 29328 / DSM 20472 / WAL 2508) (Peptostreptococcus magnus) protein is Threonine--tRNA ligase.